The chain runs to 555 residues: Glypican-6 (555 aa).

The N-terminal stretch at Met1 to Ala23 is a signal peptide. Over residues Pro348–Pro357 the composition is skewed to low complexity. 2 disordered regions span residues Pro348–Ala376 and Gly480–Cys501. Ser529 is lipidated: GPI-anchor amidated serine. A propeptide spans Ser530–Arg555 (removed in mature form).

It belongs to the glypican family. In terms of tissue distribution, widely expressed. High expression in fetal kidney and lung and lower expressions in fetal liver and brain. In adult tissues, very abundant in ovary, high levels also observed in liver, kidney, small intestine and colon. Not detected in peripheral blood leukocytes. Detected in breast cancer cells (at protein level).

It is found in the cell membrane. The protein resides in the secreted. Its subcellular location is the extracellular space. Functionally, cell surface proteoglycan that bears heparan sulfate. Putative cell surface coreceptor for growth factors, extracellular matrix proteins, proteases and anti-proteases. Enhances migration and invasion of cancer cells through WNT5A signaling. The sequence is that of Glypican-6 (GPC6) from Homo sapiens (Human).